We begin with the raw amino-acid sequence, 271 residues long: MLGLKEKICLYGFNNLTKTLSFNIYDICYAKTEREKEDYIKYIDEQYNSERLTKILCDVTEMIGAHVLNISKQDYEPQGASVNVLITEEALPVALIDPSCNKGELSYLELRDSVVGHLDKSHLTVHTYPEFHPNNDIISFRVDIDVSTCGKISPLNALDYLIGSFDSDVITIDYRVRGFTRDVDGRKCYIDHDIKSIQDYIDGETLKKYDAMDVNVYQSNIFHTKMMLKDIVLNNYLFNSDPYELSPNDRREIRDRISKEMIEIYGGVNIY.

The active-site Schiff-base intermediate with substrate; via pyruvic acid is the Ser-121. Position 121 is a pyruvic acid (Ser); by autocatalysis (Ser-121). His-126 functions as the Proton acceptor; for processing activity in the catalytic mechanism. Residue Cys-149 is the Proton donor; for catalytic activity of the active site.

Belongs to the prokaryotic AdoMetDC family. Type 2 subfamily. In terms of assembly, heterooctamer of four alpha and four beta chains arranged as a tetramer of alpha/beta heterodimers. It depends on pyruvate as a cofactor. Post-translationally, is synthesized initially as an inactive proenzyme. Formation of the active enzyme involves a self-maturation process in which the active site pyruvoyl group is generated from an internal serine residue via an autocatalytic post-translational modification. Two non-identical subunits are generated from the proenzyme in this reaction, and the pyruvate is formed at the N-terminus of the alpha chain, which is derived from the carboxyl end of the proenzyme. The post-translation cleavage follows an unusual pathway, termed non-hydrolytic serinolysis, in which the side chain hydroxyl group of the serine supplies its oxygen atom to form the C-terminus of the beta chain, while the remainder of the serine residue undergoes an oxidative deamination to produce ammonia and the pyruvoyl group blocking the N-terminus of the alpha chain.

The catalysed reaction is S-adenosyl-L-methionine + H(+) = S-adenosyl 3-(methylsulfanyl)propylamine + CO2. The protein operates within amine and polyamine biosynthesis; S-adenosylmethioninamine biosynthesis; S-adenosylmethioninamine from S-adenosyl-L-methionine: step 1/1. In terms of biological role, catalyzes the decarboxylation of S-adenosylmethionine to S-adenosylmethioninamine (dcAdoMet), the propylamine donor required for the synthesis of the polyamines spermine and spermidine from the diamine putrescine. This is S-adenosylmethionine decarboxylase proenzyme from Clostridium perfringens (strain ATCC 13124 / DSM 756 / JCM 1290 / NCIMB 6125 / NCTC 8237 / Type A).